A 624-amino-acid chain; its full sequence is Phosphatidylserine decarboxylase proenzyme 2 (624 aa).

Positions M1–E30 are disordered. Residues G16 to L129 form the C2 domain. EF-hand domains are found at residues T156–K191 and L192–K227. Positions 169, 171, 173, 175, 180, 205, 207, 209, and 216 each coordinate Ca(2+). Catalysis depends on charge relay system; for autoendoproteolytic cleavage activity residues D425, H481, and S569. Residue S569 is the Schiff-base intermediate with substrate; via pyruvic acid; for decarboxylase activity of the active site. At S569 the chain carries Pyruvic acid (Ser); by autocatalysis.

This sequence belongs to the phosphatidylserine decarboxylase family. PSD-B subfamily. Eukaryotic type II sub-subfamily. Heterodimer of a large membrane-associated beta subunit and a small pyruvoyl-containing alpha subunit. Requires pyruvate as cofactor. Post-translationally, is synthesized initially as an inactive proenzyme. Formation of the active enzyme involves a self-maturation process in which the active site pyruvoyl group is generated from an internal serine residue via an autocatalytic post-translational modification. Two non-identical subunits are generated from the proenzyme in this reaction, and the pyruvate is formed at the N-terminus of the alpha chain, which is derived from the carboxyl end of the proenzyme. The autoendoproteolytic cleavage occurs by a canonical serine protease mechanism, in which the side chain hydroxyl group of the serine supplies its oxygen atom to form the C-terminus of the beta chain, while the remainder of the serine residue undergoes an oxidative deamination to produce ammonia and the pyruvoyl prosthetic group on the alpha chain. During this reaction, the Ser that is part of the protease active site of the proenzyme becomes the pyruvoyl prosthetic group, which constitutes an essential element of the active site of the mature decarboxylase.

It localises to the vacuole membrane. Its subcellular location is the endoplasmic reticulum membrane. It carries out the reaction a 1,2-diacyl-sn-glycero-3-phospho-L-serine + H(+) = a 1,2-diacyl-sn-glycero-3-phosphoethanolamine + CO2. It functions in the pathway phospholipid metabolism; phosphatidylethanolamine biosynthesis; phosphatidylethanolamine from CDP-diacylglycerol: step 2/2. Catalyzes the formation of phosphatidylethanolamine (PtdEtn) from phosphatidylserine (PtdSer). Plays a central role in phospholipid metabolism and in the interorganelle trafficking of phosphatidylserine. The chain is Phosphatidylserine decarboxylase proenzyme 2 from Oryza sativa subsp. japonica (Rice).